The primary structure comprises 268 residues: Putative F-box protein At3g23420 (268 aa).

In terms of domain architecture, F-box spans 5–51 (PRDLSDLPRNMAEEVLSRVPMTSLRRLRFTCKKWNTLSRCRSFAKKH).

The sequence is that of Putative F-box protein At3g23420 from Arabidopsis thaliana (Mouse-ear cress).